The sequence spans 156 residues: tRNA (cytidine(34)-2'-O)-methyltransferase (156 aa).

S-adenosyl-L-methionine is bound by residues G102, L124, and S132.

This sequence belongs to the class IV-like SAM-binding methyltransferase superfamily. RNA methyltransferase TrmH family. TrmL subfamily. As to quaternary structure, homodimer.

It localises to the cytoplasm. The catalysed reaction is cytidine(34) in tRNA + S-adenosyl-L-methionine = 2'-O-methylcytidine(34) in tRNA + S-adenosyl-L-homocysteine + H(+). The enzyme catalyses 5-carboxymethylaminomethyluridine(34) in tRNA(Leu) + S-adenosyl-L-methionine = 5-carboxymethylaminomethyl-2'-O-methyluridine(34) in tRNA(Leu) + S-adenosyl-L-homocysteine + H(+). Functionally, methylates the ribose at the nucleotide 34 wobble position in the two leucyl isoacceptors tRNA(Leu)(CmAA) and tRNA(Leu)(cmnm5UmAA). Catalyzes the methyl transfer from S-adenosyl-L-methionine to the 2'-OH of the wobble nucleotide. The sequence is that of tRNA (cytidine(34)-2'-O)-methyltransferase from Burkholderia cenocepacia (strain HI2424).